The primary structure comprises 140 residues: Ribosome-binding factor A (140 aa).

The segment at 1–23 is disordered; that stretch reads MLRDRNRSGVRGGAEGPSQRQRR.

Belongs to the RbfA family. In terms of assembly, monomer. Binds 30S ribosomal subunits, but not 50S ribosomal subunits or 70S ribosomes.

The protein resides in the cytoplasm. Its function is as follows. One of several proteins that assist in the late maturation steps of the functional core of the 30S ribosomal subunit. Associates with free 30S ribosomal subunits (but not with 30S subunits that are part of 70S ribosomes or polysomes). Required for efficient processing of 16S rRNA. May interact with the 5'-terminal helix region of 16S rRNA. The sequence is that of Ribosome-binding factor A from Acidiphilium cryptum (strain JF-5).